Consider the following 623-residue polypeptide: Xaa-Pro aminopeptidase 1 (623 aa).

Residue Arg-77 participates in a peptide binding. Lys-304 carries the N6-acetyllysine modification. His-395 is an a peptide binding site. The Mn(2+) site is built by Asp-415, Asp-426, and His-489. Residues His-489, His-498, and Glu-523 each coordinate a peptide. Mn(2+)-binding residues include Glu-523 and Glu-537.

The protein belongs to the peptidase M24B family. Homodimer. The cofactor is Mn(2+). Expressed in all tissues tested, including pancreas, heart, muscle, kidney, liver, lung and brain. Highest levels in pancreas.

The protein resides in the cytoplasm. It localises to the cytosol. It carries out the reaction Release of any N-terminal amino acid, including proline, that is linked to proline, even from a dipeptide or tripeptide.. Its activity is regulated as follows. Inhibited by apstatin and the metal ion chelators EDTA and 1,10-phenanthroline. Partially inhibited by dithiothreitol. Not inhibited by enalaprilat or amastatin. Specifically inhibited by the pseudodipeptide CQ31. Inhibition by CQ31 indirectly activates the CARD8 inflammasome: dipeptide accumulation following PEPD inactivation weaky inhibit dipeptidyl peptidases DDP8 and DPP9, relieving DPP8- and/or DPP9-mediated inhibition of CARD8. Metalloaminopeptidase that catalyzes the removal of a penultimate prolyl residue from the N-termini of peptides, such as Arg-Pro-Pro. Contributes to the degradation of bradykinin. This Homo sapiens (Human) protein is Xaa-Pro aminopeptidase 1.